A 356-amino-acid chain; its full sequence is Pyrimidine monooxygenase RutA (356 aa).

FMN contacts are provided by residues 49–50, asparagine 115, glutamate 124, 140–141, and serine 190; these read IK and RY.

This sequence belongs to the NtaA/SnaA/DszA monooxygenase family. RutA subfamily.

The enzyme catalyses uracil + FMNH2 + NADH + O2 = (Z)-3-ureidoacrylate + FMN + NAD(+) + H2O + H(+). It carries out the reaction thymine + FMNH2 + NADH + O2 = (Z)-2-methylureidoacrylate + FMN + NAD(+) + H2O + H(+). Functionally, catalyzes the pyrimidine ring opening between N-3 and C-4 by an unusual flavin hydroperoxide-catalyzed mechanism, adding oxygen atoms in the process to yield ureidoacrylate peracid, that immediately reacts with FMN forming ureidoacrylate and FMN-N(5)-oxide. The FMN-N(5)-oxide reacts spontaneously with NADH to produce FMN. Requires the flavin reductase RutF to regenerate FMN in vivo. The sequence is that of Pyrimidine monooxygenase RutA from Haliangium ochraceum (strain DSM 14365 / JCM 11303 / SMP-2).